A 173-amino-acid polypeptide reads, in one-letter code: Ribosome maturation factor RimM (173 aa).

The PRC barrel domain occupies 96–169 (PDEYYDHQLE…LVEIDPPEGL (74 aa)).

It belongs to the RimM family. Binds ribosomal protein uS19.

Its subcellular location is the cytoplasm. Functionally, an accessory protein needed during the final step in the assembly of 30S ribosomal subunit, possibly for assembly of the head region. Essential for efficient processing of 16S rRNA. May be needed both before and after RbfA during the maturation of 16S rRNA. It has affinity for free ribosomal 30S subunits but not for 70S ribosomes. This is Ribosome maturation factor RimM from Mycobacterium sp. (strain JLS).